The sequence spans 131 residues: Maturin (131 aa).

Residues 107 to 120 (FEEYNADVEEEEPE) are compositionally biased toward acidic residues. A disordered region spans residues 107–131 (FEEYNADVEEEEPEADHQQMGVSQQ).

It belongs to the MTURN family.

It is found in the cytoplasm. Functionally, involved in early neuronal development; required for cell cycle exit and differentiation of primary neurons. Cooperates synergistically with pak3 to promote primary neural differentiation within the neural plate. May play a role in promoting megakaryocyte differentiation. This Xenopus laevis (African clawed frog) protein is Maturin (mturn).